The primary structure comprises 452 residues: Putative tripartite motif-containing protein 49B (452 aa).

An RING-type zinc finger spans residues 15 to 56 (CPICMNYFIDPVTIDCGHSFCRPCFYLNWKDSPFLVQCSECT). The B box-type zinc finger occupies 88–129 (SEEQMCGTHRETKKMFCEVDRSLLCLLCSSSQEHRDHRHCPI). C93, H96, C115, and H121 together coordinate Zn(2+). The B30.2/SPRY domain occupies 269–452 (ELSAGPITGL…LRPIFCCIHF (184 aa)).

The protein belongs to the TRIM/RBCC family.

The sequence is that of Putative tripartite motif-containing protein 49B (TRIM49B) from Homo sapiens (Human).